A 369-amino-acid polypeptide reads, in one-letter code: Anthranilate phosphoribosyltransferase (369 aa).

Residues G99, 102 to 103, 109 to 112, 127 to 135, and S139 contribute to the 5-phospho-alpha-D-ribose 1-diphosphate site; these read GD, NVST, and KHGNRGVSS. G99 contributes to the anthranilate binding site. S111 contributes to the Mg(2+) binding site. N130 is a binding site for anthranilate. R185 lines the anthranilate pocket. Positions 244 and 245 each coordinate Mg(2+).

The protein belongs to the anthranilate phosphoribosyltransferase family. Homodimer. Mg(2+) is required as a cofactor.

It carries out the reaction N-(5-phospho-beta-D-ribosyl)anthranilate + diphosphate = 5-phospho-alpha-D-ribose 1-diphosphate + anthranilate. It participates in amino-acid biosynthesis; L-tryptophan biosynthesis; L-tryptophan from chorismate: step 2/5. In terms of biological role, catalyzes the transfer of the phosphoribosyl group of 5-phosphorylribose-1-pyrophosphate (PRPP) to anthranilate to yield N-(5'-phosphoribosyl)-anthranilate (PRA). The protein is Anthranilate phosphoribosyltransferase of Psychrobacter sp. (strain PRwf-1).